Consider the following 243-residue polypeptide: Voltage-gated monoatomic cation channel TMEM109 (243 aa).

The signal sequence occupies residues 1 to 33 (MAASSISSPWGKHVFKAILMVLVALILLHSALA). Topologically, residues 34-83 (QSRRDFAPPGQQKREAPVDVLTQIGRSVRGTLDAWIGPETMHLVSESSSQ) are lumenal. The chain crosses the membrane as a helical span at residues 84–104 (VLWAISSAISVAFFALSGIAA). Topologically, residues 105-135 (QLLNALGLAGDYLAQGLKLSPGQVQTFLLWG) are cytoplasmic. Residues 136–156 (AGALVVYWLLSLLLGLVLALL) form a helical membrane-spanning segment. The Lumenal portion of the chain corresponds to 157 to 185 (GRILWGLKLVIFLAGFVALMRSVPDPSTR). Residues 186–205 (ALLLLALLILYALLSRLTGS) traverse the membrane as a helical segment. The Cytoplasmic portion of the chain corresponds to 206 to 243 (RASGAQLEAKVRGLERQVEELRWRQRRAAKGARSVEEE).

In terms of assembly, homooligomer. Interacts with CRYAB; in the cellular response to DNA damage.

The protein resides in the nucleus outer membrane. Its subcellular location is the endoplasmic reticulum membrane. It is found in the sarcoplasmic reticulum membrane. The enzyme catalyses K(+)(in) = K(+)(out). It carries out the reaction Ca(2+)(in) = Ca(2+)(out). Its function is as follows. Functions as a voltage-gated monoatomic cation channel permeable to both potassium and calcium. Plays a role in the cellular response to DNA damage. The polypeptide is Voltage-gated monoatomic cation channel TMEM109 (Homo sapiens (Human)).